A 443-amino-acid polypeptide reads, in one-letter code: Phosphoglucosamine mutase (443 aa).

Catalysis depends on Ser-101, which acts as the Phosphoserine intermediate. 4 residues coordinate Mg(2+): Ser-101, Asp-239, Asp-241, and Asp-243. Ser-101 is subject to Phosphoserine.

The protein belongs to the phosphohexose mutase family. Mg(2+) is required as a cofactor. In terms of processing, activated by phosphorylation.

It carries out the reaction alpha-D-glucosamine 1-phosphate = D-glucosamine 6-phosphate. Functionally, catalyzes the conversion of glucosamine-6-phosphate to glucosamine-1-phosphate. This chain is Phosphoglucosamine mutase, found in Francisella tularensis subsp. tularensis (strain FSC 198).